The following is a 326-amino-acid chain: Tagatose 1,6-diphosphate aldolase (326 aa).

The protein belongs to the aldolase LacD family.

The catalysed reaction is D-tagatofuranose 1,6-bisphosphate = D-glyceraldehyde 3-phosphate + dihydroxyacetone phosphate. The protein operates within carbohydrate metabolism; D-tagatose 6-phosphate degradation; D-glyceraldehyde 3-phosphate and glycerone phosphate from D-tagatose 6-phosphate: step 2/2. The sequence is that of Tagatose 1,6-diphosphate aldolase from Staphylococcus aureus (strain Mu3 / ATCC 700698).